Here is a 293-residue protein sequence, read N- to C-terminus: uncharacterized protein (293 aa).

D119 is a catalytic residue.

The protein belongs to the pseudouridine synthase RluA family.

The catalysed reaction is a uridine in RNA = a pseudouridine in RNA. This is an uncharacterized protein from Helicobacter pylori (strain J99 / ATCC 700824) (Campylobacter pylori J99).